The following is a 622-amino-acid chain: UvrABC system protein C (622 aa).

The region spanning 13 to 92 (DKPGVYLMKN…IKKYRPRYNI (80 aa)) is the GIY-YIG domain. The UVR domain occupies 204 to 239 (KDIIRKLKEDMDTLSENMEFEKAAELRDKIFALEKI).

It belongs to the UvrC family. As to quaternary structure, interacts with UvrB in an incision complex.

It localises to the cytoplasm. Functionally, the UvrABC repair system catalyzes the recognition and processing of DNA lesions. UvrC both incises the 5' and 3' sides of the lesion. The N-terminal half is responsible for the 3' incision and the C-terminal half is responsible for the 5' incision. This is UvrABC system protein C from Clostridium kluyveri (strain ATCC 8527 / DSM 555 / NBRC 12016 / NCIMB 10680 / K1).